The sequence spans 160 residues: Conopressin/conophysin, isoform 2 (160 aa).

Residues 1–30 (MKCSVLQMSRLSWAMCLMLLMLLLLGTAQG) form the signal peptide. An intrachain disulfide couples Cys-31 to Cys-36. Gly-39 carries the post-translational modification Glycine amide. The propeptide occupies 40 to 47 (GKRAVDAL). 7 disulfides stabilise this stretch: Cys-53/Cys-97, Cys-56/Cys-70, Cys-64/Cys-87, Cys-71/Cys-77, Cys-104/Cys-118, Cys-112/Cys-130, and Cys-119/Cys-124.

Belongs to the vasopressin/oxytocin family. Expressed by the venom gland.

It is found in the secreted. In terms of biological role, targets vasopressin-oxytocin related receptors. In Conus monile (Necklace cone), this protein is Conopressin/conophysin, isoform 2.